Here is a 351-residue protein sequence, read N- to C-terminus: MLYYLYEHFHINIFHYITFRAILAFFLSFFITIFIMPKFISWAKAKATQPIFELAPDNHKTKNSTPTMGGLIYITSAVISILITTEFNKYVLLTLLLLVYFTYLGFIDDYGKIKGSSNKAGLSAKTKFLLQWVGALVISYLLIKVGFDTKLYVPFYKYPIFDMGYYAVIFWAFIIVAMSNAVNLTDGLDGLATVPSIFSLFTLGILLYIVGNYKFSSYLFYPFELGVGELTIIVFALIGALLGFLWYNANPAEVFMGDSGSLPLGAVIGFLAIVAKSELLLIFIAFVFIMETVSVILQVGSYKTRGKRVFKMAPIHHHFEMLGWKENKITIRFWIMALITNLIAILSIKIR.

Transmembrane regions (helical) follow at residues 22-42 (ILAF…FISW), 65-85 (TPTM…LITT), 87-107 (FNKY…LGFI), 128-148 (FLLQ…VGFD), 158-178 (YPIF…IVAM), 190-210 (GLAT…LYIV), 225-245 (LGVG…LGFL), 254-274 (VFMG…LAIV), 279-299 (LLLI…ILQV), and 328-348 (KITI…ILSI).

The protein belongs to the glycosyltransferase 4 family. MraY subfamily. The cofactor is Mg(2+).

Its subcellular location is the cell inner membrane. It carries out the reaction UDP-N-acetyl-alpha-D-muramoyl-L-alanyl-gamma-D-glutamyl-meso-2,6-diaminopimeloyl-D-alanyl-D-alanine + di-trans,octa-cis-undecaprenyl phosphate = di-trans,octa-cis-undecaprenyl diphospho-N-acetyl-alpha-D-muramoyl-L-alanyl-D-glutamyl-meso-2,6-diaminopimeloyl-D-alanyl-D-alanine + UMP. Its pathway is cell wall biogenesis; peptidoglycan biosynthesis. Functionally, catalyzes the initial step of the lipid cycle reactions in the biosynthesis of the cell wall peptidoglycan: transfers peptidoglycan precursor phospho-MurNAc-pentapeptide from UDP-MurNAc-pentapeptide onto the lipid carrier undecaprenyl phosphate, yielding undecaprenyl-pyrophosphoryl-MurNAc-pentapeptide, known as lipid I. This is Phospho-N-acetylmuramoyl-pentapeptide-transferase from Nautilia profundicola (strain ATCC BAA-1463 / DSM 18972 / AmH).